Here is a 518-residue protein sequence, read N- to C-terminus: Metal transporter Nramp1 (518 aa).

12 consecutive transmembrane segments (helical) span residues Phe-35–Met-55, Glu-68–Ala-88, Pro-107–Ile-127, Ile-131–Ile-151, Val-172–Val-192, Ile-218–Leu-238, Phe-255–Ile-275, Ser-315–Ala-337, Leu-357–Ser-377, Leu-382–Leu-402, Ile-418–Phe-438, and Val-458–Leu-478.

Belongs to the NRAMP (TC 2.A.55) family.

Its subcellular location is the membrane. Its function is as follows. Probable metal transporter that may participate in the control of iron homeostasis. This Oryza sativa subsp. japonica (Rice) protein is Metal transporter Nramp1 (NRAMP1).